A 269-amino-acid polypeptide reads, in one-letter code: C-type lectin domain family 2 member G (269 aa).

Residues 1–107 are Cytoplasmic-facing; sequence MNITRASLPM…SPESSAKLYC (107 aa). A helical; Signal-anchor for type II membrane protein transmembrane segment spans residues 108–128; it reads CCGVIMVLTVAVVALSVALPA. The Extracellular segment spans residues 129–269; sequence TKTEQILINK…SLHCPTPVPV (141 aa). The 105-residue stretch at 150–254 folds into the C-type lectin domain; it reads VGNKCFYFSE…HYIPRIWICS (105 aa). N-linked (GlcNAc...) asparagine glycosylation is present at asparagine 163. Cysteine 171 and cysteine 253 form a disulfide bridge.

As to expression, detected in vagina, eye, tongue, stomach and spleen.

Its subcellular location is the cell membrane. Its function is as follows. Inhibits osteoclast formation. In Mus musculus (Mouse), this protein is C-type lectin domain family 2 member G (Clec2g).